The sequence spans 256 residues: 5-keto-4-deoxy-D-glucarate aldolase (256 aa).

The active-site Proton acceptor is the H50. Residue Q151 coordinates substrate. A Mg(2+)-binding site is contributed by E153. Substrate contacts are provided by S178 and D179. D179 serves as a coordination point for Mg(2+).

It belongs to the HpcH/HpaI aldolase family. KDGluc aldolase subfamily. In terms of assembly, homohexamer; trimer of dimers. Requires Mg(2+) as cofactor.

It catalyses the reaction 5-dehydro-4-deoxy-D-glucarate = 2-hydroxy-3-oxopropanoate + pyruvate. The catalysed reaction is 2-dehydro-3-deoxy-D-glucarate = 2-hydroxy-3-oxopropanoate + pyruvate. Its pathway is carbohydrate acid metabolism; galactarate degradation; D-glycerate from galactarate: step 2/3. Functionally, catalyzes the reversible retro-aldol cleavage of both 5-keto-4-deoxy-D-glucarate and 2-keto-3-deoxy-D-glucarate to pyruvate and tartronic semialdehyde. In Shigella sonnei (strain Ss046), this protein is 5-keto-4-deoxy-D-glucarate aldolase.